Consider the following 157-residue polypeptide: 6,7-dimethyl-8-ribityllumazine synthase (157 aa).

5-amino-6-(D-ribitylamino)uracil-binding positions include F24, 58 to 60, and 82 to 84; these read SFE and AVI. 87–88 serves as a coordination point for (2S)-2-hydroxy-3-oxobutyl phosphate; the sequence is ET. H90 acts as the Proton donor in catalysis. Residue F115 participates in 5-amino-6-(D-ribitylamino)uracil binding. R129 lines the (2S)-2-hydroxy-3-oxobutyl phosphate pocket.

Belongs to the DMRL synthase family.

It carries out the reaction (2S)-2-hydroxy-3-oxobutyl phosphate + 5-amino-6-(D-ribitylamino)uracil = 6,7-dimethyl-8-(1-D-ribityl)lumazine + phosphate + 2 H2O + H(+). The protein operates within cofactor biosynthesis; riboflavin biosynthesis; riboflavin from 2-hydroxy-3-oxobutyl phosphate and 5-amino-6-(D-ribitylamino)uracil: step 1/2. Functionally, catalyzes the formation of 6,7-dimethyl-8-ribityllumazine by condensation of 5-amino-6-(D-ribitylamino)uracil with 3,4-dihydroxy-2-butanone 4-phosphate. This is the penultimate step in the biosynthesis of riboflavin. The polypeptide is 6,7-dimethyl-8-ribityllumazine synthase (Thermus thermophilus (strain ATCC BAA-163 / DSM 7039 / HB27)).